The sequence spans 233 residues: 7-cyano-7-deazaguanine synthase (233 aa).

13–23 (LSGGLDSTTCL) is an ATP binding site. 4 residues coordinate Zn(2+): Cys197, Cys206, Cys209, and Cys212.

Belongs to the QueC family. The cofactor is Zn(2+).

It catalyses the reaction 7-carboxy-7-deazaguanine + NH4(+) + ATP = 7-cyano-7-deazaguanine + ADP + phosphate + H2O + H(+). It functions in the pathway purine metabolism; 7-cyano-7-deazaguanine biosynthesis. Catalyzes the ATP-dependent conversion of 7-carboxy-7-deazaguanine (CDG) to 7-cyano-7-deazaguanine (preQ(0)). This chain is 7-cyano-7-deazaguanine synthase, found in Anaeromyxobacter sp. (strain Fw109-5).